A 303-amino-acid chain; its full sequence is Glycine--tRNA ligase alpha subunit (303 aa).

This sequence belongs to the class-II aminoacyl-tRNA synthetase family. In terms of assembly, tetramer of two alpha and two beta subunits.

It is found in the cytoplasm. The catalysed reaction is tRNA(Gly) + glycine + ATP = glycyl-tRNA(Gly) + AMP + diphosphate. In Streptococcus equi subsp. zooepidemicus (strain H70), this protein is Glycine--tRNA ligase alpha subunit.